Here is a 3411-residue protein sequence, read N- to C-terminus: Genome polyprotein (3411 aa).

Over 1–104 the chain is Cytoplasmic; the sequence is MSGRKAQGKT…LSSRKRRSHD (104 aa). Positions 38–72 are hydrophobic; homodimerization of capsid protein C; it reads PGPSRGVQGFIFFFLFNILTGKKITAHLKRLWKML. Residues 102–121 constitute a propeptide, ER anchor for the capsid protein C, removed in mature form by serine protease NS3; it reads SHDVLTVQFLILGMLLMTGG. Residues 105 to 125 traverse the membrane as a helical segment; sequence VLTVQFLILGMLLMTGGVTLV. Over 126 to 244 the chain is Extracellular; sequence RKNRWLLLNV…GERQLQKIER (119 aa). 2 N-linked (GlcNAc...) asparagine; by host glycosylation sites follow: Asn-134 and Asn-150. The chain crosses the membrane as a helical span at residues 245–265; sequence WLVRNPFFAVTALTIAYLVGS. Residues 266 to 270 are Cytoplasmic-facing; the sequence is NMTQR. A helical transmembrane segment spans residues 271–285; it reads VVIALLVLAVGPAYS. Residues 286–730 are Extracellular-facing; it reads AHCIGITDRD…TVFGSAFQGL (445 aa). 8 disulfides stabilise this stretch: Cys-288–Cys-315, Cys-345–Cys-401, Cys-345–Cys-406, Cys-359–Cys-390, Cys-377–Cys-401, Cys-377–Cys-406, Cys-467–Cys-568, and Cys-585–Cys-615. Residues 383–396 form a fusion peptide region; it reads DRGWGNGCGLFGKG. A helical membrane pass occupies residues 731 to 751; sequence FGGLNWITKVIMGAVLIWVGI. Residues 752-757 are Extracellular-facing; sequence NTRNMT. Residues 758–778 traverse the membrane as a helical segment; that stretch reads MSMSMILVGVIMMFLSLGVGA. Residues 779–1132 are Extracellular-facing; sequence DQGCAINFGK…LVRSWVTAGE (354 aa). Disulfide bonds link Cys-782-Cys-793, Cys-833-Cys-921, Cys-957-Cys-1002, Cys-1058-Cys-1107, Cys-1069-Cys-1091, and Cys-1090-Cys-1094. Asn-908 and Asn-986 each carry an N-linked (GlcNAc...) asparagine; by host glycan. The chain crosses the membrane as a helical span at residues 1133–1153; it reads IHAVPFGLVSMMIAMEVVLRK. Residues 1154-1201 lie on the Cytoplasmic side of the membrane; sequence RQGPKQMLVGGVVLLGAMLVGQVTLLDLLKLTVAVGLHFHEMNNGGDA. Residues 1202-1222 form a helical membrane-spanning segment; the sequence is MYMALIAAFSIRPGLLIGFGL. Over 1223-1287 the chain is Lumenal; that stretch reads RTLWSPRERL…ILPLMALLTP (65 aa). A helical transmembrane segment spans residues 1288 to 1308; sequence VTMAEVRLATMLFCTVVIIGV. Topologically, residues 1309–1355 are cytoplasmic; it reads LHQNSKDTSMQKTIPLVALTLTSYLGLTQPFLGLCAFLATRIFGRRS. A helical membrane pass occupies residues 1356 to 1376; it reads IPVNEALAAAGLVGVLAGLAF. Residues 1377–1378 are Lumenal-facing; sequence QE. Residues 1379–1399 traverse the membrane as a helical segment; it reads MENFLGPIAVGGILMMLVSVA. Topologically, residues 1400–1456 are cytoplasmic; the sequence is GRVDGLELKKLGEVSWEEEAEISGSSARYDVALSEQGEFKLLSEEKVPWDQVVMTSL. The interacts with and activates NS3 protease stretch occupies residues 1407 to 1446; sequence LKKLGEVSWEEEAEISGSSARYDVALSEQGEFKLLSEEKV. Positions 1457–1477 form an intramembrane region, helical; the sequence is ALVGAAIHPFALLLVLAGWLF. Residues 1478 to 2157 lie on the Cytoplasmic side of the membrane; that stretch reads HVRGARRSGD…RNALSMMPEA (680 aa). One can recognise a Peptidase S7 domain in the interval 1485–1665; that stretch reads SGDVLWDIPT…EVKEEGKEEL (181 aa). Catalysis depends on charge relay system; for serine protease NS3 activity residues His-1537, Asp-1561, and Ser-1622. Residues 1669-1825 form the Helicase ATP-binding domain; sequence PTMLKKGMTT…HSNGEIEDVQ (157 aa). The segment at 1673–1676 is important for RNA-binding; it reads KKGM. 1682–1689 serves as a coordination point for ATP; it reads FHPGAGKT. Residues 1773-1776 carry the DEAH box motif; that stretch reads DEAH. A Helicase C-terminal domain is found at 1820-1997; that stretch reads EIEDVQTDIP…VRGGMVAPLY (178 aa). Lys-1877 carries the post-translational modification N6-acetyllysine; by host. Residues 1942-1961 are disordered; that stretch reads AAQRRGRIGRNPNRDGDSYY. Residues 2158 to 2178 traverse the membrane as a helical segment; it reads MTIVMLFILAGLLTSGMVIFF. The Lumenal portion of the chain corresponds to 2179–2186; sequence MSPKGISR. Positions 2187-2207 form an intramembrane region, helical; it reads MSMAMGTMAGCGYLMFLGGVK. The Lumenal portion of the chain corresponds to 2208–2209; the sequence is PT. The chain crosses the membrane as a helical span at residues 2210–2230; the sequence is HISYIMLIFFVLMVVVIPEPG. Residues 2231–2241 are Cytoplasmic-facing; it reads QQRSIQDNQVA. The helical transmembrane segment at 2242-2262 threads the bilayer; the sequence is YLIIGILTLVSVVAANELGML. At 2263-2293 the chain is on the lumenal side; it reads EKTKEDLFGKKNLIPSSASPWSWPDLDLKPG. Positions 2294–2314 form an intramembrane region, helical; it reads AAWTVYVGIVTMLSPMLHHWI. The Lumenal portion of the chain corresponds to 2315 to 2360; sequence KVEYGNLSLSGIAQSASVLSFMDKGIPFMKMNISVIILLVSGWNSI. The chain crosses the membrane as a helical span at residues 2361 to 2380; that stretch reads TVMPLLCGIGCAMLHWSLIL. Over 2381–2421 the chain is Cytoplasmic; sequence PGIKAQQSKLAQRRVFHGVAKNPVVDGNPTVDIEEAPEMPA. The chain crosses the membrane as a helical span at residues 2422-2442; the sequence is LYEKKLALYLLLALSLASVAM. The Lumenal portion of the chain corresponds to 2443 to 2445; that stretch reads CRT. A helical transmembrane segment spans residues 2446 to 2466; it reads PFSLAEGIVLASAALGPLIEG. Residues 2467–3411 are Cytoplasmic-facing; that stretch reads NTSLLWNGPM…DADLQPGELI (945 aa). In terms of domain architecture, mRNA cap 0-1 NS5-type MT spans 2507-2771; the sequence is GSANGKTLGE…DVILPIGTRS (265 aa). Ser-2562 is a binding site for S-adenosyl-L-methionine. Ser-2562 bears the Phosphoserine mark. Catalysis depends on Lys-2567, which acts as the For 2'-O-MTase activity. The S-adenosyl-L-methionine site is built by Gly-2592, Trp-2593, Thr-2610, Leu-2611, Asp-2637, and Ile-2638. The active-site For 2'-O-MTase activity is Asp-2652. Ile-2653 contacts S-adenosyl-L-methionine. Residues Lys-2688 and Glu-2724 each act as for 2'-O-MTase activity in the active site. Position 2726 (Tyr-2726) interacts with S-adenosyl-L-methionine. The short motif at 2878 to 2911 is the Nuclear localization signal element; it reads RKIMKVVNRWLFRHLAREKNPRLCTKEEFIAKVR. Residues Glu-2945, His-2949, Cys-2954, and Cys-2957 each contribute to the Zn(2+) site. Residues 3035-3187 form the RdRp catalytic domain; it reads GGFYADDTAG…RPIDDRFGLA (153 aa). Residues His-3222, Cys-3238, and Cys-3357 each contribute to the Zn(2+) site.

In the N-terminal section; belongs to the class I-like SAM-binding methyltransferase superfamily. mRNA cap 0-1 NS5-type methyltransferase family. In terms of assembly, homodimer. Interacts (via N-terminus) with host EXOC1 (via C-terminus); this interaction results in EXOC1 degradation through the proteasome degradation pathway. Forms heterodimers with envelope protein E in the endoplasmic reticulum and Golgi. As to quaternary structure, homodimer; in the endoplasmic reticulum and Golgi. Interacts with protein prM. Interacts with non-structural protein 1. In terms of assembly, homodimer; Homohexamer when secreted. Interacts with envelope protein E. NS1 interacts with NS4B. Interacts with host complement protein CFH; this interaction leads to the degradation of C3. Interacts (via N-terminus) with serine protease NS3. As to quaternary structure, forms a heterodimer with serine protease NS3. May form homooligomers. In terms of assembly, forms a heterodimer with NS2B. Interacts with non-structural protein 2A (via N-terminus). Interacts with NS4B. Interacts with unphosphorylated RNA-directed RNA polymerase NS5; this interaction stimulates RNA-directed RNA polymerase NS5 guanylyltransferase activity. NS3 interacts with host PDCD6IP; this interaction contributes to virion release. Interacts with serine protease NS3. As to quaternary structure, homodimer. Interacts with host STAT2; this interaction prevents the establishment of cellular antiviral state. Interacts with serine protease NS3. Interacts with host TRIM23; this interaction leads to NS5 ubiquitination. Specific enzymatic cleavages in vivo yield mature proteins. The nascent capsid protein C contains a C-terminal hydrophobic domain that act as a signal sequence for translocation of prM into the lumen of the ER. Mature capsid protein C is cleaved at a site upstream of this hydrophobic domain by NS3. prM is cleaved in post-Golgi vesicles by a host furin, releasing the mature small envelope protein M, and peptide pr. Non-structural protein 2A-alpha, a C-terminally truncated form of non-structural protein 2A, results from partial cleavage by NS3. Specific enzymatic cleavages in vivo yield mature proteins peptide 2K acts as a signal sequence and is removed from the N-terminus of NS4B by the host signal peptidase in the ER lumen. Signal cleavage at the 2K-4B site requires a prior NS3 protease-mediated cleavage at the 4A-2K site. In terms of processing, cleaved in post-Golgi vesicles by a host furin, releasing the mature small envelope protein M, and peptide pr. This cleavage is incomplete as up to 30% of viral particles still carry uncleaved prM. Post-translationally, N-glycosylated. N-glycosylated. The excreted form is glycosylated and this is required for efficient secretion of the protein from infected cells. In terms of processing, polyubiquitinated; ubiquitination is probably mediated by host TRIM23 and is prerequisite for NS5-STAT2 interaction. NS5 is not ISGylated or sumoylated. Post-translationally, acetylated by host KAT5. Acetylation modulates NS3 RNA-binding and unwinding activities and plays an important positive role for viral replication. Phosphorylated on serines residues. This phosphorylation may trigger NS5 nuclear localization.

It is found in the virion. Its subcellular location is the host nucleus. The protein localises to the host cytoplasm. The protein resides in the host perinuclear region. It localises to the secreted. It is found in the virion membrane. Its subcellular location is the host endoplasmic reticulum membrane. It carries out the reaction Selective hydrolysis of -Xaa-Xaa-|-Yaa- bonds in which each of the Xaa can be either Arg or Lys and Yaa can be either Ser or Ala.. It catalyses the reaction RNA(n) + a ribonucleoside 5'-triphosphate = RNA(n+1) + diphosphate. The catalysed reaction is a ribonucleoside 5'-triphosphate + H2O = a ribonucleoside 5'-diphosphate + phosphate + H(+). The enzyme catalyses ATP + H2O = ADP + phosphate + H(+). It carries out the reaction a 5'-end (5'-triphosphoguanosine)-ribonucleoside in mRNA + S-adenosyl-L-methionine = a 5'-end (N(7)-methyl 5'-triphosphoguanosine)-ribonucleoside in mRNA + S-adenosyl-L-homocysteine. It catalyses the reaction a 5'-end (N(7)-methyl 5'-triphosphoguanosine)-ribonucleoside in mRNA + S-adenosyl-L-methionine = a 5'-end (N(7)-methyl 5'-triphosphoguanosine)-(2'-O-methyl-ribonucleoside) in mRNA + S-adenosyl-L-homocysteine + H(+). Plays a role in virus budding by binding to the cell membrane and gathering the viral RNA into a nucleocapsid that forms the core of a mature virus particle. During virus entry, may induce genome penetration into the host cytoplasm after hemifusion induced by the surface proteins. Can migrate to the cell nucleus where it modulates host functions. In terms of biological role, inhibits RNA silencing by interfering with host Dicer. Its function is as follows. Prevents premature fusion activity of envelope proteins in trans-Golgi by binding to envelope protein E at pH6.0. After virion release in extracellular space, gets dissociated from E dimers. Functionally, acts as a chaperone for envelope protein E during intracellular virion assembly by masking and inactivating envelope protein E fusion peptide. prM is the only viral peptide matured by host furin in the trans-Golgi network probably to avoid catastrophic activation of the viral fusion activity in acidic Golgi compartment prior to virion release. prM-E cleavage is inefficient, and many virions are only partially matured. These uncleaved prM would play a role in immune evasion. May play a role in virus budding. Exerts cytotoxic effects by activating a mitochondrial apoptotic pathway through M ectodomain. May display a viroporin activity. In terms of biological role, binds to host cell surface receptor and mediates fusion between viral and cellular membranes. Envelope protein is synthesized in the endoplasmic reticulum in the form of heterodimer with protein prM. They play a role in virion budding in the ER, and the newly formed immature particle is covered with 60 spikes composed of heterodimer between precursor prM and envelope protein E. The virion is transported to the Golgi apparatus where the low pH causes dissociation of PrM-E heterodimers and formation of E homodimers. prM-E cleavage is inefficient, and many virions are only partially matured. These uncleaved prM would play a role in immune evasion. Its function is as follows. Involved in immune evasion, pathogenesis and viral replication. Once cleaved off the polyprotein, is targeted to three destinations: the viral replication cycle, the plasma membrane and the extracellular compartment. Essential for viral replication. Required for formation of the replication complex and recruitment of other non-structural proteins to the ER-derived membrane structures. Excreted as a hexameric lipoparticle that plays a role against host immune response. Antagonizing the complement function. Binds to the host macrophages and dendritic cells. Inhibits signal transduction originating from Toll-like receptor 3 (TLR3). Functionally, component of the viral RNA replication complex that functions in virion assembly and antagonizes the host immune response. Required cofactor for the serine protease function of NS3. May have membrane-destabilizing activity and form viroporins. In terms of biological role, displays three enzymatic activities: serine protease, NTPase and RNA helicase. NS3 serine protease, in association with NS2B, performs its autocleavage and cleaves the polyprotein at dibasic sites in the cytoplasm: C-prM, NS2A-NS2B, NS2B-NS3, NS3-NS4A, NS4A-2K and NS4B-NS5. NS3 RNA helicase binds RNA and unwinds dsRNA in the 3' to 5' direction. Also plays a role in virus assembly. Its function is as follows. Regulates the ATPase activity of the NS3 helicase activity. NS4A allows NS3 helicase to conserve energy during unwinding. Functionally, functions as a signal peptide for NS4B and is required for the interferon antagonism activity of the latter. Induces the formation of ER-derived membrane vesicles where the viral replication takes place. Inhibits interferon (IFN)-induced host STAT1 phosphorylation and nuclear translocation, thereby preventing the establishment of cellular antiviral state by blocking the IFN-alpha/beta pathway. In terms of biological role, replicates the viral (+) and (-) RNA genome, and performs the capping of genomes in the cytoplasm. NS5 methylates viral RNA cap at guanine N-7 and ribose 2'-O positions. Besides its role in RNA genome replication, also prevents the establishment of cellular antiviral state by blocking the interferon-alpha/beta (IFN-alpha/beta) signaling pathway. IFN-I induces binding of NS5 to host IFN-activated transcription factor STAT2, preventing its transcriptional activity. Host TRIM23 is the E3 ligase that interacts with and polyubiquitinates NS5 to promote its binding to STAT2 and trigger IFN-I signaling inhibition. The polypeptide is Genome polyprotein (Yellow fever virus (strain Ghana/Asibi/1927) (YFV)).